We begin with the raw amino-acid sequence, 68 residues long: ATP synthase protein 8 (68 aa).

Residues 8 to 24 (VWPTIIMSMLLALFLLM) traverse the membrane as a helical segment. K54 bears the N6-acetyllysine; alternate mark. Position 54 is an N6-succinyllysine; alternate (K54). At K57 the chain carries N6-acetyllysine.

This sequence belongs to the ATPase protein 8 family. F-type ATPases have 2 components, CF(1) - the catalytic core - and CF(0) - the membrane proton channel. Component of an ATP synthase complex composed of ATP5PB, ATP5MC1, ATP5F1E, ATP5PD, ATP5ME, ATP5PF, ATP5MF, MT-ATP6, MT-ATP8, ATP5F1A, ATP5F1B, ATP5F1D, ATP5F1C, ATP5PO, ATP5MG, ATP5MK and ATP5MJ. Interacts with PRICKLE3.

Its subcellular location is the mitochondrion membrane. In terms of biological role, mitochondrial membrane ATP synthase (F(1)F(0) ATP synthase or Complex V) produces ATP from ADP in the presence of a proton gradient across the membrane which is generated by electron transport complexes of the respiratory chain. F-type ATPases consist of two structural domains, F(1) - containing the extramembraneous catalytic core and F(0) - containing the membrane proton channel, linked together by a central stalk and a peripheral stalk. During catalysis, ATP synthesis in the catalytic domain of F(1) is coupled via a rotary mechanism of the central stalk subunits to proton translocation. Part of the complex F(0) domain. Minor subunit located with subunit a in the membrane. The sequence is that of ATP synthase protein 8 (MT-ATP8) from Hylobates lar (Lar gibbon).